Here is a 268-residue protein sequence, read N- to C-terminus: Putative ABC transporter ATP-binding protein LMOf2365_1216 (268 aa).

One can recognise an ABC transporter domain in the interval 2-237 (LKTEHISFQY…KSNVEQAGLV (236 aa)). An ATP-binding site is contributed by 35-42 (GANGSGKS).

This sequence belongs to the ABC transporter superfamily.

The protein resides in the cell membrane. Its function is as follows. Probably part of an ABC transporter complex. Responsible for energy coupling to the transport system. The sequence is that of Putative ABC transporter ATP-binding protein LMOf2365_1216 from Listeria monocytogenes serotype 4b (strain F2365).